Reading from the N-terminus, the 1337-residue chain is Sister chromatid cohesion protein PDS5 homolog A (1337 aa).

Position 1 is an N-acetylmethionine (Met1). One copy of the HEAT repeat lies at 393–429; it reads ALVNDQLLGFVRERTLDKRWRVRKEAMMGLAQLYKKY. Ser1097 is subject to Phosphoserine. The residue at position 1146 (Lys1146) is an N6-acetyllysine. Residues 1150 to 1337 are disordered; sequence ATGRKPYVRS…PAERQIDLQR (188 aa). The segment covering 1159-1180 has biased composition (polar residues); the sequence is STGTETGSNINVNSELNPSTGN. Ser1195 carries the post-translational modification Phosphoserine. Thr1208 carries the phosphothreonine modification. Lys1211 carries the N6-acetyllysine modification. The span at 1223–1233 shows a compositional bias: polar residues; the sequence is SDQATQGNISS. Lys1290 bears the N6-acetyllysine mark. Ser1305 is subject to Phosphoserine. Positions 1321-1337 are enriched in basic and acidic residues; the sequence is DLAKKAAPAERQIDLQR.

Belongs to the PDS5 family. As to quaternary structure, interacts with the cohesin complex. Interacts with WAPL (via FGF motifs) or CDCA5 (via the FGF motif); the interaction is direct, cohesin-dependent and competitive. Interacts with SMC3. Interacts with TP63. Highest level in colon. Low levels in lung, ovary, breast and kidney. Reduced level in renal tumor tissue. Isoform 2 is expressed in kidney.

Its subcellular location is the nucleus. Functionally, probable regulator of sister chromatid cohesion in mitosis which may stabilize cohesin complex association with chromatin. May couple sister chromatid cohesion during mitosis to DNA replication. Cohesion ensures that chromosome partitioning is accurate in both meiotic and mitotic cells and plays an important role in DNA repair. The polypeptide is Sister chromatid cohesion protein PDS5 homolog A (Homo sapiens (Human)).